Consider the following 32-residue polypeptide: Unknown protein from spot 206 of 2D-PAGE of etiolated coleoptile (32 aa).

In Zea mays (Maize), this protein is Unknown protein from spot 206 of 2D-PAGE of etiolated coleoptile.